The following is a 395-amino-acid chain: MVVFSKVTAVVVGLSTIVSAVPVVQPRKGFTINQVARPVTNKKTVNLPAVYANALTKYGGTVPDSVKAAASSGSAVTTPEQYDSEYLTPVKVGGTTLNLDFDTGSADLWVFSSELSASQSSGHAIYKPSANAQKLNGYTWKIQYGDGSSASGDVYKDTVTVGGVTAQSQAVEAASHISSQFVQDKDNDGLLGLAFSSINTVSPRPQTTFFDTVKSQLDSPLFAVTLKYHAPGTYDFGYIDNSKFQGELTYTDVDSSQGFWMFTADGYGVGNGAPNSNSISGIADTGTTLLLLDDSVVADYYRQVSGAKNSNQYGGYVFPCSTKLPSFTTVIGGYNAVVPGEYINYAPVTDGSSTCYGGIQSNSGLGFSIFGDIFLKSQYVVFDSQGPRLGFAPQA.

An N-terminal signal peptide occupies residues 1 to 20 (MVVFSKVTAVVVGLSTIVSA). The propeptide at 21 to 70 (VPVVQPRKGFTINQVARPVTNKKTVNLPAVYANALTKYGGTVPDSVKAAA) is activation peptide. The 307-residue stretch at 86 to 392 (YLTPVKVGGT…DSQGPRLGFA (307 aa)) folds into the Peptidase A1 domain. Catalysis depends on residues aspartate 102 and aspartate 284. Cysteine 320 and cysteine 355 are joined by a disulfide.

This sequence belongs to the peptidase A1 family. In terms of assembly, monomer.

It is found in the secreted. The catalysed reaction is Hydrolysis of proteins with broad specificity. Generally favors hydrophobic residues in P1 and P1', but also accepts Lys in P1, which leads to activation of trypsinogen. Does not clot milk.. Secreted aspartic endopeptidase that allows assimilation of proteinaceous substrates. The scissile peptide bond is attacked by a nucleophilic water molecule activated by two aspartic residues in the active site. Shows a broad primary substrate specificity. Favors hydrophobic residues at the P1 and P1' positions, but also accepts a lysine residue in the P1 position, leading to the activation of trypsinogen and chymotrypsinogen A. This is Aspergillopepsin-1 (pepA) from Aspergillus fumigatus (strain CBS 144.89 / FGSC A1163 / CEA10) (Neosartorya fumigata).